Here is a 355-residue protein sequence, read N- to C-terminus: Guanine nucleotide-binding protein G(z) subunit alpha (355 aa).

A compositionally biased stretch (basic and acidic residues) spans 1-14 (MGCRQSSEEKEAAR). The segment at 1–26 (MGCRQSSEEKEAARRSRRIDRHLRSE) is disordered. G2 is lipidated: N-myristoyl glycine. C3 carries the S-palmitoyl cysteine lipid modification. Residues 32–355 (REIKLLLLGT…QNNLKYIGLC (324 aa)) enclose the G-alpha domain. The G1 motif stretch occupies residues 35 to 48 (KLLLLGTSNSGKST). Residues 40-47 (GTSNSGKS), 176-182 (LRSRDMT), 201-205 (DVGGQ), 270-273 (NKKD), and A327 contribute to the GTP site. Residues S47 and T182 each contribute to the Mg(2+) site. A G2 motif region spans residues 174–182 (DILRSRDMT). Positions 197–206 (FKMVDVGGQR) are G3 motif. The G4 motif stretch occupies residues 266–273 (ILFLNKKD). The tract at residues 325–330 (TCATDT) is G5 motif.

The protein belongs to the G-alpha family. G(i/o/t/z) subfamily. As to quaternary structure, G-proteins are composed of 3 units; alpha, beta and gamma. The alpha chain contains the guanine nucleotide binding site. Interacts with ADGRB2.

The protein resides in the membrane. Its function is as follows. Guanine nucleotide-binding proteins (G proteins) are involved as modulators or transducers in various transmembrane signaling systems. This Rattus norvegicus (Rat) protein is Guanine nucleotide-binding protein G(z) subunit alpha (Gnaz).